We begin with the raw amino-acid sequence, 132 residues long: Small ribosomal subunit protein uS8 (132 aa).

This sequence belongs to the universal ribosomal protein uS8 family. In terms of assembly, part of the 30S ribosomal subunit. Contacts proteins S5 and S12.

In terms of biological role, one of the primary rRNA binding proteins, it binds directly to 16S rRNA central domain where it helps coordinate assembly of the platform of the 30S subunit. The protein is Small ribosomal subunit protein uS8 of Anaeromyxobacter sp. (strain Fw109-5).